The sequence spans 427 residues: Gamma-glutamyl phosphate reductase (427 aa).

Belongs to the gamma-glutamyl phosphate reductase family.

The protein localises to the cytoplasm. The enzyme catalyses L-glutamate 5-semialdehyde + phosphate + NADP(+) = L-glutamyl 5-phosphate + NADPH + H(+). It participates in amino-acid biosynthesis; L-proline biosynthesis; L-glutamate 5-semialdehyde from L-glutamate: step 2/2. Catalyzes the NADPH-dependent reduction of L-glutamate 5-phosphate into L-glutamate 5-semialdehyde and phosphate. The product spontaneously undergoes cyclization to form 1-pyrroline-5-carboxylate. This chain is Gamma-glutamyl phosphate reductase, found in Rhizobium etli (strain ATCC 51251 / DSM 11541 / JCM 21823 / NBRC 15573 / CFN 42).